The chain runs to 2157 residues: MGAQVSRQNVGTHSTQNSVSNGSSLNYFNINYFKDAASSGASRLDFSQDPSKFTDPVKDVLEKGIPTLQSPSVEACGYSDRIIQITRGDSTITSQDVANAVVGYGVWPHYLTPQDATAIDKPTQPDTSSNRFYTLESKHWNGDSKGWWWKLPDALKEMGIFGENMYYHFLGRSGYTVHVQCNASKFHQGTLLVAMIPEHQLASAKNGSVTAGYNLTHPGEAGRVVGQQRDANLRQPSDDSWLNFDGTLLGNLLIFPHQFINLRSNNSATLIVPYVNAVPMDSMLRHNNWSLVIIPISPLRSETTSSNIRPITVSISPMCAEFSGARAKNVRQGLPVYITPGSGQFMTTDDMQSPCALPWYHPTKEISIPGEVKNLIEMCQVDTLIPVNNVGTNVGNISMYTVQLGNQMDMAQEVFAIKVDITSQPLATTLIGEIASYYTHWTGSLRFSFMFCGTANTTLKLLLAYTPPGIDKPATRKDAMLGTHVVWDVGLQSTISLVVPWVSASHFRLTANDKYSMAGYITCWYQTNLVVPPNTPQTADMLCFVSACKDFCLRMARDTDLHIQSGPIEQNPVENYIDEVLNEVLVVPNIKESHHTTSNSAPLLDAAETGHTSNVQPEDAIETRYVMTSQTRDEMSIESFLGRSGCVHISRIKVDYNDYNGVNKNFTTWKITLQEMAQIRRKFELFTYVRFDSEVTLVPCIAGRGDDIGHVVMQYMYVPPGAPIPKTRNDFSWQSGTNMSIFWQHGQPFPRFSLPFLSIASAYYMFYDGYDGDNSSSKYGSIVTNDMGTICSRIVTEKQEHPVVITTHIYHKAKHTKAWCPRPPRAVPYTHSRVTNYVPKTGDVTTAIVPRASMKTVGPSDLYVHVGNLIYRNLHLFNSEMHDSILVSYSSDLIIYRTNTTGDDYIPSCNCTEATYYCKHKNRYYPIKVTPHDWYEIQESEYYPKHIQYNLLIGEGPCEPGDCGGKLLCRHGVIGIITAGGEGHVAFTDLRQFQCAEEQGITDYIHMLGEAFGNGFVDSVKEQINAINPINSISKKVIKWLLRIISAMVIIIRNSSDPQTIIATLTLIGCNGSPWRFLKEKFCKWTQLTYIHKESDSWLKKFTEMCNAARGLEWIGNKISKFIDWMKSMLPQAQLKVKYLNEIKKLSLLEKQIENLRAADNATQEKIKCEIDTLHDLSCKFLPLYAHEAKRIKVLYNKCSNIIKQRKRSEPVAVMIHGPPGTGKSITTNFLARMITNESDVYSLPPDPKYFDGYDNQSVVIMDDIMQNPDGEDMTLFCQMVSSVTFIPPMADLPDKGKPFDSRFVLCSTNHSLLAPPTISSLPAMNRRFFFDLDIVVHDNYKDAQGKLNVSKAFQPCNVNTKIGNAKCCPFVCGKAVSFKDRSTCSTYTLAQVYNHILEEDKRRRQVVDVMSAIFQGPISLDAPPPPAIADLLQSVRTPEVIKYCQDNKWIVPAECQIERDLSIANSIITIIANIISIAGIIFVIYKLFCTLQGPYSGEPKPKTKMPERRVVAQGPEEEFGRSILKNNTCVITTDNGKFTGLGIYDRTLIIPTHADPGREVQVNGIHTKVLDSYDLYNRDGVKLEITVIQLDRNEKFRDIRKYIPETEDDYPECNLALSANQVEPTIIKVGDVVSYGNILLSGNQTARMLKYNYPTKSGYCGGVLYKIGQILGIHVGGNGRDGFSAMLLRSYFTDTQGQIKISKHANECGLPTIHTPSKTKLQPSVFYDVFPGSKEPAVSRDNDPRLKVNFKEALFSKYKGNTECSLNQHMEIAIAHYSAQLITLDIDSKPIALEDSVFGIEGLEALDLNTSAGFPYVTMGIKKRDLINNKTKDISRLKEALDKYGVDLPMITFLKDELRKKEKISAGKTRVIEASSINDTILFRTTFGNLFSKFHLNPGVVTGSAVGCDPETFWSKIPVMLDGDCIMAFDYTNYDGSIHPVWFQALKKVLENLSFQSNLIDRLCYSKHLFKSTYYEVAGGVPSGCSGTSIFNTMINNIIIRTLVLDAYKNIDLDKLKIIAYGDDVIFSYKYTLDMEAIANEGKKYGLTITPADKSTEFKKLDYNNVTFLKRGFKQDEKHTFLIHPTFPVEEIYESIRWTKKPSQMQEHVLSLCHLMWHNGRKVYEDFSSKIRSVSAGRALYIPPYDLLKHEWYEKF.

G2 carries the N-myristoyl glycine; by host lipid modification. Topologically, residues 2–1470 (GAQVSRQNVG…DLSIANSIIT (1469 aa)) are cytoplasmic. Residues 567 to 584 (PIEQNPVENYIDEVLNEV) form an amphipathic alpha-helix region. Catalysis depends on for protease 2A activity residues H875 and D892. Residues C909 and C911 each coordinate Zn(2+). Catalysis depends on C963, which acts as the For protease 2A activity. The Zn(2+) site is built by C969 and H971. The segment at 1095–1164 (SDSWLKKFTE…NLRAADNATQ (70 aa)) is membrane-binding. Residues 1095–1228 (SDSWLKKFTE…PPGTGKSITT (134 aa)) are oligomerization. The tract at residues 1116-1120 (GNKIS) is RNA-binding. One can recognise an SF3 helicase domain in the interval 1188–1350 (EAKRIKVLYN…YKDAQGKLNV (163 aa)). Zn(2+) contacts are provided by C1357, C1368, and C1373. Residues 1357-1373 (CNVNTKIGNAKCCPFVC) form a C4-type; degenerate zinc finger. Positions 1400-1407 (EDKRRRQV) are RNA-binding. Positions 1411–1416 (MSAIFQ) are oligomerization. Residues 1471-1486 (IIANIISIAGIIFVIY) lie within the membrane without spanning it. At 1487 to 2157 (KLFCTLQGPY…LLKHEWYEKF (671 aa)) the chain is on the cytoplasmic side. The residue at position 1496 (Y1496) is an O-(5'-phospho-RNA)-tyrosine. The 179-residue stretch at 1515–1693 (GPEEEFGRSI…FSAMLLRSYF (179 aa)) folds into the Peptidase C3 domain. Residues H1554, E1585, and C1661 each act as for protease 3C activity in the active site. Residues 1925–2038 (DCIMAFDYTN…SYKYTLDMEA (114 aa)) form the RdRp catalytic domain. Positions 1931 and 2024 each coordinate Mg(2+).

It belongs to the picornaviruses polyprotein family. Interacts with capsid protein VP1 and capsid protein VP3 to form heterotrimeric protomers. As to quaternary structure, interacts with capsid protein VP0, and capsid protein VP3 to form heterotrimeric protomers. Five protomers subsequently associate to form pentamers which serve as building blocks for the capsid. Interacts with capsid protein VP2, capsid protein VP3 and capsid protein VP4 following cleavage of capsid protein VP0. In terms of assembly, interacts with capsid protein VP1 and capsid protein VP3 in the mature capsid. Interacts with capsid protein VP0 and capsid protein VP1 to form heterotrimeric protomers. Five protomers subsequently associate to form pentamers which serve as building blocks for the capsid. Interacts with capsid protein VP4 in the mature capsid. Interacts with protein 2C; this interaction may be important for virion morphogenesis. As to quaternary structure, interacts with capsid protein VP1 and capsid protein VP3. In terms of assembly, homodimer. Homohexamer; forms a hexameric ring structure with 6-fold symmetry characteristic of AAA+ ATPases. Interacts (via N-terminus) with host RTN3 (via reticulon domain); this interaction is important for viral replication. Interacts with capsid protein VP3; this interaction may be important for virion morphogenesis. As to quaternary structure, interacts with protein 3CD. In terms of assembly, homodimer. Interacts with host GBF1. Interacts (via GOLD domain) with host ACBD3 (via GOLD domain); this interaction allows the formation of a viral protein 3A/ACBD3 heterotetramer with a 2:2 stoichiometry, which will stimulate the recruitment of host PI4KB in order to synthesize PI4P at the viral RNA replication sites. Interacts with RNA-directed RNA polymerase. As to quaternary structure, interacts with protein 3AB and with RNA-directed RNA polymerase. In terms of assembly, interacts with Viral protein genome-linked and with protein 3CD. The cofactor is Mg(2+). Post-translationally, specific enzymatic cleavages in vivo by the viral proteases yield processing intermediates and the mature proteins. In terms of processing, myristoylation is required for the formation of pentamers during virus assembly. Further assembly of 12 pentamers and a molecule of genomic RNA generates the provirion. During virion maturation, immature virions are rendered infectious following cleavage of VP0 into VP4 and VP2. This maturation seems to be an autocatalytic event triggered by the presence of RNA in the capsid and it is followed by a conformational change infectious virion. Post-translationally, myristoylation is required during RNA encapsidation and formation of the mature virus particle. In terms of processing, VPg is uridylylated by the polymerase into VPg-pUpU. This acts as a nucleotide-peptide primer for the genomic RNA replication.

It localises to the virion. The protein localises to the host cytoplasm. The protein resides in the host cytoplasmic vesicle membrane. Its subcellular location is the host nucleus. The enzyme catalyses a ribonucleoside 5'-triphosphate + H2O = a ribonucleoside 5'-diphosphate + phosphate + H(+). It carries out the reaction Selective cleavage of Tyr-|-Gly bond in the picornavirus polyprotein.. It catalyses the reaction RNA(n) + a ribonucleoside 5'-triphosphate = RNA(n+1) + diphosphate. The catalysed reaction is Selective cleavage of Gln-|-Gly bond in the poliovirus polyprotein. In other picornavirus reactions Glu may be substituted for Gln, and Ser or Thr for Gly.. Replication or transcription is subject to high level of random mutations by the nucleotide analog ribavirin. Functionally, forms an icosahedral capsid of pseudo T=3 symmetry with capsid proteins VP2 and VP3. The capsid is 300 Angstroms in diameter, composed of 60 copies of each capsid protein and enclosing the viral positive strand RNA genome. Capsid protein VP1 mainly forms the vertices of the capsid. Capsid protein VP1 interacts with host cell receptor to provide virion attachment to target host cells. This attachment induces virion internalization. Tyrosine kinases are probably involved in the entry process. After binding to its receptor, the capsid undergoes conformational changes. Capsid protein VP1 N-terminus (that contains an amphipathic alpha-helix) and capsid protein VP4 are externalized. Together, they shape a pore in the host membrane through which viral genome is translocated to host cell cytoplasm. In terms of biological role, forms an icosahedral capsid of pseudo T=3 symmetry with capsid proteins VP2 and VP3. The capsid is 300 Angstroms in diameter, composed of 60 copies of each capsid protein and enclosing the viral positive strand RNA genome. Lies on the inner surface of the capsid shell. After binding to the host receptor, the capsid undergoes conformational changes. Capsid protein VP4 is released, Capsid protein VP1 N-terminus is externalized, and together, they shape a pore in the host membrane through which the viral genome is translocated into the host cell cytoplasm. Its function is as follows. Component of immature procapsids, which is cleaved into capsid proteins VP4 and VP2 after maturation. Allows the capsid to remain inactive before the maturation step. Functionally, cysteine protease that cleaves viral polyprotein and specific host proteins. It is responsible for the autocatalytic cleavage between the P1 and P2 regions, which is the first cleavage occurring in the polyprotein. Also cleaves the host translation initiation factor EIF4G1, in order to shut down the capped cellular mRNA translation. Inhibits the host nucleus-cytoplasm protein and RNA trafficking by cleaving host members of the nuclear pores. Counteracts stress granule formation probably by antagonizing its assembly or promoting its dissassembly. In terms of biological role, plays an essential role in the virus replication cycle by acting as a viroporin. Creates a pore in the host endoplasmic reticulum and as a consequence releases Ca2+ in the cytoplasm of infected cell. In turn, high levels of cytoplasmic calcium may trigger membrane trafficking and transport of viral ER-associated proteins to viroplasms, sites of viral genome replication. Induces and associates with structural rearrangements of intracellular membranes. Displays RNA-binding, nucleotide binding and NTPase activities. May play a role in virion morphogenesis and viral RNA encapsidation by interacting with the capsid protein VP3. Its function is as follows. Localizes the viral replication complex to the surface of membranous vesicles. Together with protein 3CD binds the Cis-Active RNA Element (CRE) which is involved in RNA synthesis initiation. Acts as a cofactor to stimulate the activity of 3D polymerase, maybe through a nucleid acid chaperone activity. Functionally, localizes the viral replication complex to the surface of membranous vesicles. It inhibits host cell endoplasmic reticulum-to-Golgi apparatus transport and causes the disassembly of the Golgi complex, possibly through GBF1 interaction. This would result in depletion of MHC, trail receptors and IFN receptors at the host cell surface. Plays an essential role in viral RNA replication by recruiting ACBD3 and PI4KB at the viral replication sites, thereby allowing the formation of the rearranged membranous structures where viral replication takes place. In terms of biological role, acts as a primer for viral RNA replication and remains covalently bound to viral genomic RNA. VPg is uridylylated prior to priming replication into VPg-pUpU. The oriI viral genomic sequence may act as a template for this. The VPg-pUpU is then used as primer on the genomic RNA poly(A) by the RNA-dependent RNA polymerase to replicate the viral genome. During genome replication, the VPg-RNA linkage is removed by the host TDP2, thereby accelerating replication. During the late stage of the replication cycle, host TDP2 is excluded from sites of viral RNA synthesis and encapsidation, allowing for the generation of progeny virions. Involved in the viral replication complex and viral polypeptide maturation. It exhibits protease activity with a specificity and catalytic efficiency that is different from protease 3C. Protein 3CD lacks polymerase activity. Protein 3CD binds to the 5'UTR of the viral genome. Its function is as follows. Replicates the viral genomic RNA on the surface of intracellular membranes. May form linear arrays of subunits that propagate along a strong head-to-tail interaction called interface-I. Covalently attaches UMP to a tyrosine of VPg, which is used to prime RNA synthesis. The positive stranded RNA genome is first replicated at virus induced membranous vesicles, creating a dsRNA genomic replication form. This dsRNA is then used as template to synthesize positive stranded RNA genomes. ss(+)RNA genomes are either translated, replicated or encapsidated. Functionally, major viral protease that mediates proteolytic processing of the polyprotein. Cleaves host EIF5B, contributing to host translation shutoff. Also cleaves host PABPC1, contributing to host translation shutoff. Cleaves host NLRP1, triggers host N-glycine-mediated degradation of the autoinhibitory NLRP1 N-terminal fragment. The chain is Genome polyprotein from Homo sapiens (Human).